The primary structure comprises 392 residues: Tryptophan synthase beta chain (392 aa).

Position 84 is an N6-(pyridoxal phosphate)lysine (Lys84).

Belongs to the TrpB family. In terms of assembly, tetramer of two alpha and two beta chains. The cofactor is pyridoxal 5'-phosphate.

The enzyme catalyses (1S,2R)-1-C-(indol-3-yl)glycerol 3-phosphate + L-serine = D-glyceraldehyde 3-phosphate + L-tryptophan + H2O. Its pathway is amino-acid biosynthesis; L-tryptophan biosynthesis; L-tryptophan from chorismate: step 5/5. In terms of biological role, the beta subunit is responsible for the synthesis of L-tryptophan from indole and L-serine. The sequence is that of Tryptophan synthase beta chain from Campylobacter jejuni subsp. jejuni serotype O:6 (strain 81116 / NCTC 11828).